The sequence spans 435 residues: Monodehydroascorbate reductase 3, cytosolic (435 aa).

Residues 14–17, Glu-41, Arg-48, Lys-53, Ile-96, and 147–148 contribute to the FAD site; these read GGVA and RE. Residues 172 to 178, Glu-196, Arg-202, and Gly-261 contribute to the NAD(+) site; that span reads GGYIGLE. NADP(+) is bound at residue 174–178; the sequence is YIGLE. The NADP(+) site is built by Arg-202 and Gly-261. FAD is bound at residue Asp-298. 314 to 315 serves as a coordination point for NAD(+); it reads EH. 314–315 provides a ligand contact to NADP(+); that stretch reads EH. Val-316 is an FAD binding site. Residue Arg-320 coordinates L-ascorbate. Tyr-349 contacts FAD. Residue Tyr-349 participates in NAD(+) binding. Tyr-349 serves as a coordination point for NADP(+). Residue Arg-351 coordinates L-ascorbate.

It belongs to the FAD-dependent oxidoreductase family. Requires FAD as cofactor.

Its subcellular location is the cytoplasm. The catalysed reaction is 2 monodehydro-L-ascorbate radical + NADH + H(+) = 2 L-ascorbate + NAD(+). Its function is as follows. Catalyzes the conversion of monodehydroascorbate to ascorbate, oxidizing NADH in the process. Ascorbate is a major antioxidant against reactive oxygen species (ROS) and nitric oxide (NO). Can use NADPH as electron donor, but possesses lower activity compared to NADH as electron donor. The protein is Monodehydroascorbate reductase 3, cytosolic of Oryza sativa subsp. japonica (Rice).